A 37-amino-acid chain; its full sequence is Photosystem II reaction center protein M (37 aa).

A helical membrane pass occupies residues 7–27 (AFIAVLLFLAVPTAFLLIPYV).

The protein belongs to the PsbM family. In terms of assembly, PSII is composed of 1 copy each of membrane proteins PsbA, PsbB, PsbC, PsbD, PsbE, PsbF, PsbH, PsbI, PsbJ, PsbK, PsbL, PsbM, PsbT, PsbX, PsbY, PsbZ, Psb30/Ycf12, at least 3 peripheral proteins of the oxygen-evolving complex and a large number of cofactors. It forms dimeric complexes.

The protein localises to the plastid. It is found in the chloroplast thylakoid membrane. In terms of biological role, one of the components of the core complex of photosystem II (PSII). PSII is a light-driven water:plastoquinone oxidoreductase that uses light energy to abstract electrons from H(2)O, generating O(2) and a proton gradient subsequently used for ATP formation. It consists of a core antenna complex that captures photons, and an electron transfer chain that converts photonic excitation into a charge separation. This subunit is found at the monomer-monomer interface. This chain is Photosystem II reaction center protein M, found in Pinus thunbergii (Japanese black pine).